The primary structure comprises 333 residues: N-acetyl-gamma-glutamyl-phosphate reductase (333 aa).

C136 is a catalytic residue.

The protein belongs to the NAGSA dehydrogenase family. Type 1 subfamily.

It is found in the cytoplasm. It catalyses the reaction N-acetyl-L-glutamate 5-semialdehyde + phosphate + NADP(+) = N-acetyl-L-glutamyl 5-phosphate + NADPH + H(+). It functions in the pathway amino-acid biosynthesis; L-arginine biosynthesis; N(2)-acetyl-L-ornithine from L-glutamate: step 3/4. In terms of biological role, catalyzes the NADPH-dependent reduction of N-acetyl-5-glutamyl phosphate to yield N-acetyl-L-glutamate 5-semialdehyde. In Xylella fastidiosa (strain 9a5c), this protein is N-acetyl-gamma-glutamyl-phosphate reductase.